The primary structure comprises 231 residues: Small proline-rich protein 3 (231 aa).

Residues 1–104 are disordered; the sequence is MSSYQQKQPF…GSGYSVVPQP (104 aa). Serine 2 carries the post-translational modification N-acetylserine. Repeat copies occupy residues 55–62, 63–70, 71–78, 79–86, 87–94, 95–102, 103–110, 111–118, 119–126, 127–134, 135–142, 143–150, 151–158, 159–166, 167–174, 175–182, 183–190, 191–198, 199–206, 207–214, and 215–222. The interval 55–222 is 21 X 8 AA approximate tandem repeats; it reads EQGYVKIPEQ…VQEPNPSIVT (168 aa). The span at 80-94 shows a compositional bias: polar residues; the sequence is SGNTKVPESGCTSVP. Residues 188 to 231 are disordered; that stretch reads KVPESGCTSVPGPGYPTVPQPGYTKVQEPNPSIVTPGLSQKKTK. The segment covering 214 to 231 has biased composition (polar residues); that stretch reads QEPNPSIVTPGLSQKKTK.

It belongs to the cornifin (SPRR) family. Suprabasal layers of the squamous epithelia of esophagus, tongue and oral mucosa.

The protein localises to the cytoplasm. In terms of biological role, can serve as a substrate in transglutaminase-catalyzed cross linking reactions and can function as a cross-linked envelope precursor. The polypeptide is Small proline-rich protein 3 (SPRR3) (Oryctolagus cuniculus (Rabbit)).